We begin with the raw amino-acid sequence, 327 residues long: Undecaprenyl-phosphate 4-deoxy-4-formamido-L-arabinose transferase (327 aa).

At 1–235 (MFDAAPIKKV…TCLTTTPLRL (235 aa)) the chain is on the cytoplasmic side. Residues 236–256 (LSLLGSVIAIGGFSLSVLLIV) form a helical membrane-spanning segment. At 257 to 269 (LRLALGPQWAAEG) the chain is on the periplasmic side. A helical transmembrane segment spans residues 270 to 290 (VFMLFAVLFTFIGAQFIGMGL). Over 291 to 327 (LGEYIGRIYNDVRARPRYFVQQVIYPESTPFTEESHQ) the chain is Cytoplasmic.

It belongs to the glycosyltransferase 2 family.

It is found in the cell inner membrane. It carries out the reaction UDP-4-deoxy-4-formamido-beta-L-arabinose + di-trans,octa-cis-undecaprenyl phosphate = 4-deoxy-4-formamido-alpha-L-arabinopyranosyl di-trans,octa-cis-undecaprenyl phosphate + UDP. The protein operates within glycolipid biosynthesis; 4-amino-4-deoxy-alpha-L-arabinose undecaprenyl phosphate biosynthesis; 4-amino-4-deoxy-alpha-L-arabinose undecaprenyl phosphate from UDP-4-deoxy-4-formamido-beta-L-arabinose and undecaprenyl phosphate: step 1/2. It participates in bacterial outer membrane biogenesis; lipopolysaccharide biosynthesis. Its function is as follows. Catalyzes the transfer of 4-deoxy-4-formamido-L-arabinose from UDP to undecaprenyl phosphate. The modified arabinose is attached to lipid A and is required for resistance to polymyxin and cationic antimicrobial peptides. This chain is Undecaprenyl-phosphate 4-deoxy-4-formamido-L-arabinose transferase, found in Salmonella dublin (strain CT_02021853).